A 28-amino-acid polypeptide reads, in one-letter code: Short cationic peptide-1a (28 aa).

Glu28 carries the glutamic acid 1-amide modification.

As to expression, expressed by the venom gland.

Its subcellular location is the secreted. The protein is Short cationic peptide-1a of Cupiennius salei (American wandering spider).